The following is a 340-amino-acid chain: PI-PLC X domain-containing protein 2 (340 aa).

The PI-PLC X-box domain maps to 42-215; sequence HLHNVPLSNL…KYQVLIFYHC (174 aa). Residues His57 and His132 contribute to the active site.

As to expression, expressed at highest levels in brain, followed by stomach and small intestine. Detected at low levels in kidney, ey, thymus and slkeletal muscle.

Its subcellular location is the nucleus. It catalyses the reaction a 1,2-diacyl-sn-glycero-3-phospho-(1D-myo-inositol) + H2O = 1D-myo-inositol 1-phosphate + a 1,2-diacyl-sn-glycerol + H(+). Its function is as follows. Catalyzes the hydrolysis of inositol from phosphatidylinositol (1,2-diacyl-sn-glycero-3-phospho-(1D-myo-inositol), PI). Could also hydrolyze various multi-phosphorylated derivatives of PI, such as phosphatidylinositol-4,5 bisphosphate (PIP2), releasing inositol-1,4,5-trisphosphate (IP3) and the protein kinase C activator diacylglycerol (DAG), therefore mediating cell signaling. This is PI-PLC X domain-containing protein 2 (Plcxd2) from Mus musculus (Mouse).